The primary structure comprises 150 residues: Large ribosomal subunit protein bL9 (150 aa).

It belongs to the bacterial ribosomal protein bL9 family.

Its function is as follows. Binds to the 23S rRNA. The chain is Large ribosomal subunit protein bL9 from Cupriavidus taiwanensis (strain DSM 17343 / BCRC 17206 / CCUG 44338 / CIP 107171 / LMG 19424 / R1) (Ralstonia taiwanensis (strain LMG 19424)).